We begin with the raw amino-acid sequence, 1953 residues long: Putative surface-exposed virulence protein BigA (1953 aa).

The N-terminal stretch at 1 to 27 (MNPMQKKKLISIAIALTLQSYYIPAIA) is a signal peptide. 3 disordered regions span residues 31–50 (NDDEKECPSNISSLPKEKRA), 88–258 (GGGD…TFSN), and 1496–1517 (TTAPTEGSIPTPPADPNAPQQL). Residues 101–103 (PDN) form a 1; truncated repeat. Positions 101–252 (PDNGGDVTPP…DDDDTPPDDS (152 aa)) are 15 X 11 AA tandem repeats. Residues 104-113 (GGDVTPPDDG) form a 2; truncated repeat. One copy of the 3; truncated repeat lies at 114-122 (GNVTPPDDG). Tandem repeats lie at residues 123–133 (GNVTPPDDGGD), 134–144 (DNVTPPDDSGD), 145–155 (DDVAPPDDSGD), 156–166 (DDVTPPDDSGD), 167–177 (DDVTPPDDSGD), 178–188 (GDVTPPDDSGD), 189–199 (DDVTPPDDSGD), 200–210 (DDVTPPDDSGD), 211–221 (DDVTPPDDSGD), 222–232 (DDVTPPDDSGD), and 233–243 (DDVTPPDDSGD). Acidic residues-rich tracts occupy residues 141–177 (DSGDDDVAPPDDSGDDDVTPPDDSGDDDVTPPDDSGD) and 185–249 (DSGD…DTPP). The stretch at 244 to 252 (DDDTPPDDS) is one 15; truncated repeat. Residues 1649–1952 (SGAQATTVFR…GFMLNVKKTF (304 aa)) form the Autotransporter domain.

This chain is Putative surface-exposed virulence protein BigA (bigA), found in Salmonella typhimurium (strain LT2 / SGSC1412 / ATCC 700720).